Here is a 1875-residue protein sequence, read N- to C-terminus: Protein MLP1 (1875 aa).

At Ser-2 the chain carries N-acetylserine. Coiled-coil stretches lie at residues 69–487 (ELKA…IQYL) and 531–1678 (ERLV…SAES). Residue Thr-337 is modified to Phosphothreonine. Ser-379 carries the phosphoserine modification. The Required for nuclear localization motif lies at 1496–1565 (QPSNINMEEI…EEKVEERIKS (70 aa)). The segment at 1641–1689 (KKSFDEGKQQAMMKTTLLERKLAKMESQLSETKQSAESPPKSVNNVQNP) is disordered. Positions 1667–1688 (SQLSETKQSAESPPKSVNNVQN) are enriched in polar residues. Phosphoserine occurs at positions 1670 and 1710. A compositionally biased stretch (low complexity) spans 1716 to 1725 (KLNSKSSSGG). The tract at residues 1716 to 1875 (KLNSKSSSGG…TDKVNDENSI (160 aa)) is disordered. A compositionally biased stretch (polar residues) spans 1728 to 1737 (PFTSPSPNKH). Position 1733 is a phosphoserine (Ser-1733). The span at 1738 to 1748 (LQNDNDKRESL) shows a compositional bias: basic and acidic residues. The span at 1787 to 1801 (TSNNPAQKDSSNRNV) shows a compositional bias: polar residues. The residue at position 1803 (Ser-1803) is a Phosphoserine. Basic and acidic residues-rich tracts occupy residues 1807–1840 (TEKKKEGEPVKRGEAIEEQTKSNKRPIDEVGELK) and 1865–1875 (ETDKVNDENSI). Residues 1834 to 1866 (DEVGELKNDEDDTTENINESKKIKTEDEEEKET) adopt a coiled-coil conformation.

In terms of assembly, component of the nuclear pore complex (NPC). NPC constitutes the exclusive means of nucleocytoplasmic transport. NPCs allow the passive diffusion of ions and small molecules and the active, nuclear transport receptor-mediated bidirectional transport of macromolecules such as proteins, RNAs, ribonucleoparticles (RNPs), and ribosomal subunits across the nuclear envelope. Due to its 8-fold rotational symmetry, all subunits are present with 8 copies or multiples thereof. Interacts with NAB2, a hnRNP required for mRNA export. Interacts with MLP2. May be phosphorylated by CDC28.

The protein resides in the nucleus. Its subcellular location is the nuclear pore complex. Functionally, together with the closely related MLP2, involved in the structural and functional organization of perinuclear chromatin. Together with MLP2, associates with the nuclear pore complex and form filamentous structures along the nuclear periphery. Has a role in the localization of Esc1 to nucleolar regions. Together with MLP2, mediates tethering of the some telomeres to the nuclear periphery, probably mediated by YKU70/YKU80 (HDF1/HDF2) heterodimer and show perinuclear location dependent silencing. MLP1 and MLP2 are involved in telomere length regulation but not silencing or telomere anchoring. Recognizes the 5'-splice site of pre-mRNAs and retains unspliced pre-mRNA in the nucleus without affecting splicing itself. In Saccharomyces cerevisiae (strain ATCC 204508 / S288c) (Baker's yeast), this protein is Protein MLP1 (MLP1).